Consider the following 246-residue polypeptide: Uridylate kinase (246 aa).

16–19 is a binding site for ATP; that stretch reads KLGG. G57 is a UMP binding site. ATP-binding residues include G58 and R62. UMP is bound by residues D77 and 138–145; that span reads MGMPYFST. ATP contacts are provided by Y171 and D174.

Belongs to the UMP kinase family. Homohexamer.

It is found in the cytoplasm. The enzyme catalyses UMP + ATP = UDP + ADP. The protein operates within pyrimidine metabolism; CTP biosynthesis via de novo pathway; UDP from UMP (UMPK route): step 1/1. Its activity is regulated as follows. Inhibited by UTP. In terms of biological role, catalyzes the reversible phosphorylation of UMP to UDP. This Corynebacterium jeikeium (strain K411) protein is Uridylate kinase.